The chain runs to 302 residues: Glutamyl-Q tRNA(Asp) synthetase (302 aa).

Residues arginine 13–serine 17 and aspartate 49 contribute to the L-glutamate site. The short motif at proline 16–serine 26 is the 'HIGH' region element. Cysteine 105, cysteine 107, tyrosine 119, and cysteine 123 together coordinate Zn(2+). Positions 178 and 196 each coordinate L-glutamate. A 'KMSKS' region motif is present at residues lysine 234 to glutamine 238. ATP is bound at residue lysine 237.

This sequence belongs to the class-I aminoacyl-tRNA synthetase family. GluQ subfamily. The cofactor is Zn(2+).

Its function is as follows. Catalyzes the tRNA-independent activation of glutamate in presence of ATP and the subsequent transfer of glutamate onto a tRNA(Asp). Glutamate is transferred on the 2-amino-5-(4,5-dihydroxy-2-cyclopenten-1-yl) moiety of the queuosine in the wobble position of the QUC anticodon. This Methylococcus capsulatus (strain ATCC 33009 / NCIMB 11132 / Bath) protein is Glutamyl-Q tRNA(Asp) synthetase.